The chain runs to 256 residues: DNA repair protein RecO (256 aa).

Belongs to the RecO family.

Involved in DNA repair and RecF pathway recombination. In Rhizobium leguminosarum bv. trifolii (strain WSM2304), this protein is DNA repair protein RecO.